Consider the following 357-residue polypeptide: DNA replication and repair protein RecF (357 aa).

An ATP-binding site is contributed by 30–37 (GANGSGKT).

Belongs to the RecF family.

The protein localises to the cytoplasm. In terms of biological role, the RecF protein is involved in DNA metabolism; it is required for DNA replication and normal SOS inducibility. RecF binds preferentially to single-stranded, linear DNA. It also seems to bind ATP. The sequence is that of DNA replication and repair protein RecF from Escherichia coli O6:K15:H31 (strain 536 / UPEC).